A 239-amino-acid chain; its full sequence is Adapter protein MecA (239 aa).

The segment covering 118–128 has biased composition (basic and acidic residues); sequence EQRTKEKEAQG. Residues 118–137 are disordered; it reads EQRTKEKEAQGSKRQKSSAR.

The protein belongs to the MecA family. Homodimer.

Enables the recognition and targeting of unfolded and aggregated proteins to the ClpC protease or to other proteins involved in proteolysis. The protein is Adapter protein MecA of Staphylococcus aureus (strain JH1).